Consider the following 46-residue polypeptide: L-amino-acid oxidase (46 aa).

Asparagine 31 carries an N-linked (GlcNAc...) asparagine glycan.

It belongs to the flavin monoamine oxidase family. FIG1 subfamily. The cofactor is FAD.

The protein localises to the secreted. Its subcellular location is the lysosome. The protein resides in the cytoplasmic vesicle. It is found in the secretory vesicle. It localises to the acrosome. It catalyses the reaction an L-alpha-amino acid + O2 + H2O = a 2-oxocarboxylate + H2O2 + NH4(+). It carries out the reaction L-tryptophan + O2 + H2O = indole-3-pyruvate + H2O2 + NH4(+). The enzyme catalyses L-phenylalanine + O2 + H2O = 3-phenylpyruvate + H2O2 + NH4(+). The catalysed reaction is L-tyrosine + O2 + H2O = 3-(4-hydroxyphenyl)pyruvate + H2O2 + NH4(+). It catalyses the reaction L-arginine + O2 + H2O = 5-guanidino-2-oxopentanoate + H2O2 + NH4(+). Its pathway is amino-acid degradation; L-tryptophan degradation via pyruvate pathway. In terms of biological role, secreted L-amino-acid oxidase that acts as a key immunoregulator. Has preference for L-aromatic amino acids: converts phenylalanine (Phe), tyrosine (Tyr) and tryptophan (Trp) to phenylpyruvic acid (PP), hydroxyphenylpyruvic acid (HPP), and indole-3-pyruvic acid (I3P), respectively. Also has weak L-arginine oxidase activity. Acts as a negative regulator of anti-tumor immunity by mediating Trp degradation via an indole pyruvate pathway that activates the transcription factor AHR. IL4I1-mediated Trp catabolism generates I3P, giving rise to indole metabolites (indole-3-acetic acid (IAA) and indole-3-aldehyde (I3A)) and kynurenic acid, which act as ligands for AHR, a ligand-activated transcription factor that plays important roles in immunity and cancer. AHR activation by indoles following IL4I1-mediated Trp degradation enhances tumor progression by promoting cancer cell motility and suppressing adaptive immunity. Also has an immunoregulatory function in some immune cells, probably by mediating Trp degradation and promoting downstream AHR activation: inhibits T-cell activation and proliferation, promotes the differentiation of naive CD4(+) T-cells into FOXP3(+) regulatory T-cells (Treg) and regulates the development and function of B-cells. Also regulates M2 macrophage polarization by inhibiting T-cell activation. Also has antibacterial properties by inhibiting growth of Gram negative and Gram positive bacteria through the production of NH4(+) and H2O2. The sequence is that of L-amino-acid oxidase from Mus spretus (Western Mediterranean mouse).